Consider the following 339-residue polypeptide: Probable N5-carboxyaminoimidazole ribonucleotide mutase (339 aa).

Positions 11, 14, and 41 each coordinate substrate.

The protein belongs to the AIR carboxylase family. Class I subfamily.

It catalyses the reaction 5-carboxyamino-1-(5-phospho-D-ribosyl)imidazole + H(+) = 5-amino-1-(5-phospho-D-ribosyl)imidazole-4-carboxylate. The protein operates within purine metabolism; IMP biosynthesis via de novo pathway; 5-amino-1-(5-phospho-D-ribosyl)imidazole-4-carboxylate from 5-amino-1-(5-phospho-D-ribosyl)imidazole (N5-CAIR route): step 2/2. Its function is as follows. Catalyzes the conversion of N5-carboxyaminoimidazole ribonucleotide (N5-CAIR) to 4-carboxy-5-aminoimidazole ribonucleotide (CAIR). This chain is Probable N5-carboxyaminoimidazole ribonucleotide mutase, found in Methanobrevibacter smithii.